Reading from the N-terminus, the 350-residue chain is Biotin synthase (350 aa).

The 228-residue stretch at Asn-41–Arg-268 folds into the Radical SAM core domain. [4Fe-4S] cluster contacts are provided by Cys-56, Cys-60, and Cys-63. [2Fe-2S] cluster is bound by residues Cys-100, Cys-131, Cys-191, and Arg-263.

It belongs to the radical SAM superfamily. Biotin synthase family. In terms of assembly, homodimer. It depends on [4Fe-4S] cluster as a cofactor. Requires [2Fe-2S] cluster as cofactor.

The enzyme catalyses (4R,5S)-dethiobiotin + (sulfur carrier)-SH + 2 reduced [2Fe-2S]-[ferredoxin] + 2 S-adenosyl-L-methionine = (sulfur carrier)-H + biotin + 2 5'-deoxyadenosine + 2 L-methionine + 2 oxidized [2Fe-2S]-[ferredoxin]. The protein operates within cofactor biosynthesis; biotin biosynthesis; biotin from 7,8-diaminononanoate: step 2/2. Functionally, catalyzes the conversion of dethiobiotin (DTB) to biotin by the insertion of a sulfur atom into dethiobiotin via a radical-based mechanism. This chain is Biotin synthase, found in Shewanella putrefaciens (strain CN-32 / ATCC BAA-453).